We begin with the raw amino-acid sequence, 348 residues long: Macrophage-capping protein (348 aa).

Met-1 carries the post-translational modification N-acetylmethionine. A Gelsolin-like 1 repeat occupies 27–75; it reads EKLKPVPVAQENQGVFFSGDSYLVLHNGPEEVSHLHLWIGQQSSRDEQG. Residues 137–146 carry the Nuclear localization signal motif; the sequence is KKLYQVKGKK. 2 Gelsolin-like repeats span residues 148–188 and 261–307; these read IRAT…LERN and MNLT…KERQ. Ser-337 carries the post-translational modification Phosphoserine.

Belongs to the villin/gelsolin family. Interacts with NUP62. Interacts with NUTF2 and RAN; involved in CAPG nuclear import. In terms of processing, the N-terminus is blocked. In terms of tissue distribution, macrophages and macrophage-like cells.

It localises to the nucleus. The protein resides in the cytoplasm. Its subcellular location is the melanosome. It is found in the cell projection. The protein localises to the lamellipodium. It localises to the ruffle. Calcium-sensitive protein which reversibly blocks the barbed ends of actin filaments but does not sever preformed actin filaments. May play an important role in macrophage function. May play a role in regulating cytoplasmic and/or nuclear structures through potential interactions with actin. May bind DNA. The polypeptide is Macrophage-capping protein (CAPG) (Homo sapiens (Human)).